Reading from the N-terminus, the 350-residue chain is Putative ATP-binding protein BRA0745/BS1330_II0738 (350 aa).

The 231-residue stretch at 4 to 234 (VSLRGISKTF…PANKFVAGFI (231 aa)) folds into the ABC transporter domain. 36–43 (GPSGCGKS) is a binding site for ATP.

This sequence belongs to the ABC transporter superfamily. The complex is composed of two ATP-binding proteins (BRA0745), two transmembrane proteins (BRA0749) and a solute-binding protein (BRA0748).

The protein localises to the cell inner membrane. Its function is as follows. Probably part of an ABC transporter complex. Probably responsible for energy coupling to the transport system. The protein is Putative ATP-binding protein BRA0745/BS1330_II0738 of Brucella suis biovar 1 (strain 1330).